The following is a 506-amino-acid chain: Kynureninase 1 (506 aa).

Pyridoxal 5'-phosphate-binding positions include Leu141, Thr142, 169–172 (FPSD), Asp254, His257, and Tyr279. An N6-(pyridoxal phosphate)lysine modification is found at Lys280. A compositionally biased stretch (low complexity) spans 303–319 (ETAPTTTPDGTNGNPKT). The interval 303-322 (ETAPTTTPDGTNGNPKTISD) is disordered. Residues Trp334 and Asn362 each contribute to the pyridoxal 5'-phosphate site.

The protein belongs to the kynureninase family. In terms of assembly, homodimer. It depends on pyridoxal 5'-phosphate as a cofactor.

Its subcellular location is the cytoplasm. It catalyses the reaction L-kynurenine + H2O = anthranilate + L-alanine + H(+). It carries out the reaction 3-hydroxy-L-kynurenine + H2O = 3-hydroxyanthranilate + L-alanine + H(+). Its pathway is amino-acid degradation; L-kynurenine degradation; L-alanine and anthranilate from L-kynurenine: step 1/1. It functions in the pathway cofactor biosynthesis; NAD(+) biosynthesis; quinolinate from L-kynurenine: step 2/3. Catalyzes the cleavage of L-kynurenine (L-Kyn) and L-3-hydroxykynurenine (L-3OHKyn) into anthranilic acid (AA) and 3-hydroxyanthranilic acid (3-OHAA), respectively. In Phaeosphaeria nodorum (strain SN15 / ATCC MYA-4574 / FGSC 10173) (Glume blotch fungus), this protein is Kynureninase 1.